Here is a 694-residue protein sequence, read N- to C-terminus: Elongation factor G (694 aa).

The tr-type G domain maps to 8–287 (EDYRNFGIMA…AVVEFLPAPT (280 aa)). Residues 17–24 (AHIDAGKT), 86–90 (DTPGH), and 140–143 (NKMD) each bind GTP.

It belongs to the TRAFAC class translation factor GTPase superfamily. Classic translation factor GTPase family. EF-G/EF-2 subfamily.

Its subcellular location is the cytoplasm. Functionally, catalyzes the GTP-dependent ribosomal translocation step during translation elongation. During this step, the ribosome changes from the pre-translocational (PRE) to the post-translocational (POST) state as the newly formed A-site-bound peptidyl-tRNA and P-site-bound deacylated tRNA move to the P and E sites, respectively. Catalyzes the coordinated movement of the two tRNA molecules, the mRNA and conformational changes in the ribosome. This is Elongation factor G from Brucella abortus (strain S19).